The following is a 244-amino-acid chain: Small ribosomal subunit protein uS3 (244 aa).

Positions 39-107 constitute a KH type-2 domain; that stretch reads IRELIKKESF…KLIINVEEIK (69 aa). Residues 216-244 are disordered; sequence LPVYKNKKNDKNKKRRNNNRKGKSQAAKN. Basic residues predominate over residues 220–238; sequence KNKKNDKNKKRRNNNRKGK.

It belongs to the universal ribosomal protein uS3 family. Part of the 30S ribosomal subunit. Forms a tight complex with proteins S10 and S14.

In terms of biological role, binds the lower part of the 30S subunit head. Binds mRNA in the 70S ribosome, positioning it for translation. This chain is Small ribosomal subunit protein uS3, found in Finegoldia magna (strain ATCC 29328 / DSM 20472 / WAL 2508) (Peptostreptococcus magnus).